The following is a 373-amino-acid chain: NADH-quinone oxidoreductase subunit D (373 aa).

This sequence belongs to the complex I 49 kDa subunit family. NDH-1 is composed of 14 different subunits. Subunits NuoB, C, D, E, F, and G constitute the peripheral sector of the complex.

It localises to the cell inner membrane. It carries out the reaction a quinone + NADH + 5 H(+)(in) = a quinol + NAD(+) + 4 H(+)(out). In terms of biological role, NDH-1 shuttles electrons from NADH, via FMN and iron-sulfur (Fe-S) centers, to quinones in the respiratory chain. The immediate electron acceptor for the enzyme in this species is believed to be ubiquinone. Couples the redox reaction to proton translocation (for every two electrons transferred, four hydrogen ions are translocated across the cytoplasmic membrane), and thus conserves the redox energy in a proton gradient. This chain is NADH-quinone oxidoreductase subunit D, found in Syntrophobacter fumaroxidans (strain DSM 10017 / MPOB).